Consider the following 600-residue polypeptide: MAKEIILGIDLGTTNSVVAIIENQKPVVLENPNGKRTTPSVVAFKNNEEIVGDAAKRQLETNPEAIASIKRLMGTDKTVRANERDYKPEEISAKILAYLKEYAEKKIGHKVTKAVITVPAYFDNAQREATKNAGKIAGLQVERIINEPTAAALAFGLDKTEKEMKVLVYDLGGGTFDVSVLELSGGTFEVLSTSGDNHLGGDDWDNEIVNWLVKKIKEEYDFDPKSDKMALTRLKEEAEKTKINLSNQSVSTVSLPFLGMGKNGPINVELELKRSEFEKMTAHLIDRTRKPIVDALKQAKIEASDLDEVLLVGGSTRMPAVQSMIEHTLNKKPNRSINPDEVVAIGAAIQGGVLAGEISDVLLLDVTPLTLGIETLGGIATPLIPRNTTIPVTKSQIFSTAEDNQTEVTISVVQGERQLAADNKMLGRFNLSGIEAAPRGLPQIEVSFSIDVNGITTVSAKDKKTGKEQTITIKNTSTLSEEEINKMIQEAEENREADALKKDKIETTVRAEGLINQLEKSITDQGEKIDPKQKELLEKQIQELKDLLKEEKTDELKLKLDQIEAAAQSFAQATAQQANTSESDPKADDSNTIDAEIKQD.

Phosphothreonine; by autocatalysis is present on T175. Over residues 569-578 (SFAQATAQQA) the composition is skewed to low complexity. A disordered region spans residues 569–600 (SFAQATAQQANTSESDPKADDSNTIDAEIKQD). Over residues 583 to 600 (SDPKADDSNTIDAEIKQD) the composition is skewed to basic and acidic residues.

Belongs to the heat shock protein 70 family.

Acts as a chaperone. The chain is Chaperone protein DnaK from Mesomycoplasma hyopneumoniae (strain 7448) (Mycoplasma hyopneumoniae).